A 386-amino-acid chain; its full sequence is Cytochrome b (386 aa).

4 consecutive transmembrane segments (helical) span residues 32–52, 76–98, 113–133, and 179–199; these read LGSLLGLCLVIQICTGIFLAM, WFIRYAHANGASFFFICMYIHIG, VWNVGVIIFVLTMAAAFLGYC, and FFAFHYLVPFIIAAFVIMHFM. Heme b is bound by residues histidine 82 and histidine 96. Heme b-binding residues include histidine 183 and histidine 197. Histidine 202 is a binding site for a ubiquinone. 4 consecutive transmembrane segments (helical) span residues 225-245, 289-309, 321-341, and 348-368; these read FIFKDLITVFVFLFFFSLFVF, LLGVLAMFGAILILLVLPITD, FSKFFFFLFIANFVLLGHLGE, and FVVMGQIATVIYFAYFLVIVP.

The protein belongs to the cytochrome b family. In terms of assembly, fungal cytochrome b-c1 complex contains 10 subunits; 3 respiratory subunits, 2 core proteins and 5 low-molecular weight proteins. Cytochrome b-c1 complex is a homodimer. Requires heme b as cofactor.

It localises to the mitochondrion inner membrane. Component of the ubiquinol-cytochrome c reductase complex (complex III or cytochrome b-c1 complex) that is part of the mitochondrial respiratory chain. The b-c1 complex mediates electron transfer from ubiquinol to cytochrome c. Contributes to the generation of a proton gradient across the mitochondrial membrane that is then used for ATP synthesis. The chain is Cytochrome b (COB) from Kluyveromyces lactis (strain ATCC 8585 / CBS 2359 / DSM 70799 / NBRC 1267 / NRRL Y-1140 / WM37) (Yeast).